The primary structure comprises 131 residues: Small ribosomal subunit protein uS8 (131 aa).

Belongs to the universal ribosomal protein uS8 family. In terms of assembly, part of the 30S ribosomal subunit. Contacts proteins S5 and S12.

In terms of biological role, one of the primary rRNA binding proteins, it binds directly to 16S rRNA central domain where it helps coordinate assembly of the platform of the 30S subunit. The chain is Small ribosomal subunit protein uS8 from Chlorobium limicola (strain DSM 245 / NBRC 103803 / 6330).